Consider the following 314-residue polypeptide: Probable cell division protein WhiA (314 aa).

The segment at residues 275-309 is a DNA-binding region (H-T-H motif); the sequence is SLKELGELVTSGAISKSGVNHRLKKIDEFAEKIKR.

It belongs to the WhiA family.

Involved in cell division and chromosome segregation. In Oceanobacillus iheyensis (strain DSM 14371 / CIP 107618 / JCM 11309 / KCTC 3954 / HTE831), this protein is Probable cell division protein WhiA.